The sequence spans 244 residues: MRWCLLLIWAQGLRQAPLASGMMTGTIETTGNISAEKGGSIILQCHLSSTTAQVTQVNWEQQDQLLAICNADLGWHISPSFKDRVAPGPGLGLTLQSLTVNDTGEYFCIYHTYPDGTYTGRIFLEVLESSVAEHGARFQIPLLGAMAATLVVICTAVIVVVALTRKKKALRIHSVEGDLRRKSAGQEEWSPSAPSPPGSCVQAEAAPAGLCGEQRGEDCAELHDYFNVLSYRSLGNCSFFTETG.

A signal peptide spans 1–21; sequence MRWCLLLIWAQGLRQAPLASG. Residues 22 to 124 form the Ig-like V-type domain; sequence MMTGTIETTG…DGTYTGRIFL (103 aa). The Extracellular segment spans residues 22-141; that stretch reads MMTGTIETTG…AEHGARFQIP (120 aa). N-linked (GlcNAc...) asparagine glycosylation is found at N32 and N101. A homodimerization region spans residues 32–42; sequence NISAEKGGSII. An intrachain disulfide couples C45 to C108. The helical transmembrane segment at 142-162 threads the bilayer; it reads LLGAMAATLVVICTAVIVVVA. Over 163-244 the chain is Cytoplasmic; it reads LTRKKKALRI…GNCSFFTETG (82 aa). Residue Y225 is modified to Phosphotyrosine. The ITIM motif motif lies at 229-234; the sequence is LSYRSL.

As to quaternary structure, homodimer in cis; binds with high affinity to PVR, forming a heterotetrameric assembly of two TIGIT and two PVR molecules. Binds with lower affinity to NECTIN2 and NECTIN3. Interacts with GRB2. Interacts with NECTIN4. In terms of tissue distribution, expressed at low levels on peripheral memory and regulatory CD4+ T-cells and NK cells and is up-regulated following activation of these cells (at protein level).

Its subcellular location is the cell membrane. Its function is as follows. Inhibitory receptor that plays a role in the modulation of immune responses. Suppresses T-cell activation by promoting the generation of mature immunoregulatory dendritic cells. Upon binding to its ligands PVR/CD155 or NECTIN2/CD112, which are expressed on antigen-presenting cells, sends inhibitory signals to the T-cell or NK cell. Mechanistically, interaction with ligand leads to phosphorylation of the cytoplasmic tail by Src family tyrosine kinases such as FYN or LCK, allowing subsequent binding to adapter GRB2 and SHIP1/INPP5D. In turn, inhibits PI3K and MAPK signaling cascades. In addition, associates with beta-arrestin-2/ARRB2 to recruit SHIP1/INPP5D that suppresses autoubiquitination of TRAF6 and subsequently inhibits NF-kappa-B signaling pathway. Also acts as a receptor for NECTIN4 to inhibit NK cell cytotoxicity. In Homo sapiens (Human), this protein is T-cell immunoreceptor with Ig and ITIM domains (TIGIT).